A 603-amino-acid chain; its full sequence is MDTKIGAIDTCKPTTGDIGSPPSNAVATIQDSAPITTTSESTLGRHLSRRLVQAGVTDVFSVPGDFNLTLLDHLIAEPELNNIGCCNELNAGYAADGYARSRGVGACVVTFTVGGLSVLNAIAGAYSENLPVICIVGGPNSNDFGTNRILHHTIGLPDFSQELRCFQTVTCYQAVVNNLEDAHEQIDKAIATALKESKPVYISISCNLAATPHPTFARDPVPFDLTPRMSNTMGLEAAVEATLEFLNKAVKPVMVGGPKLRVAKASEAFLELADASGYPLAVMPSTKGLVPENHPHFIGTYWGAVSTPFCSEIVESADAYIFAGPIFNDYSSVGYSLLLKKEKAIIVHPDRVVVANGPTFGCVLMSDFFRELAKRVKRNETAYENYERIFVPEGKPLKCKPGEPLRVNAMFQHIQKMLSSETAVIAETGDSWFNCQKLKLPKGCGYEFQMQYGSIGWSVGATLGYAQATPEKRVLSFIGDGSFQVTAQDISTMIRNGQKAIIFLINNGGYTIEVEIHDGPYNVIKNWNYTGLVDAIHNGEGKCWTTKVRYEEELVEAIKTATTEKKDSLCFIEVIVHKDDTSKELLEWGSRVSAANGRPPNPQ.

Substrate contacts are provided by Asp65 and His152. The thiamine pyrophosphate binding stretch occupies residues 430–512 (DSWFNCQKLK…FLINNGGYTI (83 aa)). Mg(2+)-binding residues include Asp480, Asn507, and Gly509. Residue Glu513 participates in substrate binding.

It belongs to the TPP enzyme family. In terms of assembly, homotetramer. The cofactor is a metal cation. Thiamine diphosphate is required as a cofactor. As to expression, expressed in shoots and at lowe levels in roots, flowers and siliques.

It carries out the reaction a 2-oxocarboxylate + H(+) = an aldehyde + CO2. The polypeptide is Pyruvate decarboxylase 4 (PDC4) (Arabidopsis thaliana (Mouse-ear cress)).